The sequence spans 152 residues: SsrA-binding protein (152 aa).

The protein belongs to the SmpB family.

Its subcellular location is the cytoplasm. In terms of biological role, required for rescue of stalled ribosomes mediated by trans-translation. Binds to transfer-messenger RNA (tmRNA), required for stable association of tmRNA with ribosomes. tmRNA and SmpB together mimic tRNA shape, replacing the anticodon stem-loop with SmpB. tmRNA is encoded by the ssrA gene; the 2 termini fold to resemble tRNA(Ala) and it encodes a 'tag peptide', a short internal open reading frame. During trans-translation Ala-aminoacylated tmRNA acts like a tRNA, entering the A-site of stalled ribosomes, displacing the stalled mRNA. The ribosome then switches to translate the ORF on the tmRNA; the nascent peptide is terminated with the 'tag peptide' encoded by the tmRNA and targeted for degradation. The ribosome is freed to recommence translation, which seems to be the essential function of trans-translation. The sequence is that of SsrA-binding protein from Rickettsia rickettsii.